The following is a 470-amino-acid chain: 1-aminocyclopropane-1-carboxylate synthase 9 (470 aa).

Residues Glu47 and Tyr85 each contribute to the substrate site. An N6-(pyridoxal phosphate)lysine modification is found at Lys272.

It belongs to the class-I pyridoxal-phosphate-dependent aminotransferase family. As to quaternary structure, homodimer and heterodimer. In vivo, the relevance of heterodimerization with other ACS enzymes is however unsure. Interacts (via its C-terminal region) with FEI1, FEI2, ETO1 and EOL1. The cofactor is pyridoxal 5'-phosphate. Post-translationally, may be processed at its C-terminus. As to expression, expressed in roots and siliques.

It carries out the reaction S-adenosyl-L-methionine = 1-aminocyclopropane-1-carboxylate + S-methyl-5'-thioadenosine + H(+). Its pathway is alkene biosynthesis; ethylene biosynthesis via S-adenosyl-L-methionine; ethylene from S-adenosyl-L-methionine: step 1/2. 1-aminocyclopropane-1-carboxylate synthase (ACS) enzymes catalyze the conversion of S-adenosyl-L-methionine (SAM) into 1-aminocyclopropane-1-carboxylate (ACC), a direct precursor of ethylene. This is 1-aminocyclopropane-1-carboxylate synthase 9 (ACS9) from Arabidopsis thaliana (Mouse-ear cress).